We begin with the raw amino-acid sequence, 260 residues long: Pyridoxine 5'-phosphate synthase (260 aa).

Position 15 (Asn15) interacts with 3-amino-2-oxopropyl phosphate. 17-18 serves as a coordination point for 1-deoxy-D-xylulose 5-phosphate; sequence DH. Arg26 contributes to the 3-amino-2-oxopropyl phosphate binding site. His51 acts as the Proton acceptor in catalysis. 1-deoxy-D-xylulose 5-phosphate is bound by residues Arg53 and His58. Glu78 (proton acceptor) is an active-site residue. Position 108 (Thr108) interacts with 1-deoxy-D-xylulose 5-phosphate. The Proton donor role is filled by His199. 3-amino-2-oxopropyl phosphate-binding positions include Gly200 and 221-222; that span reads GH.

It belongs to the PNP synthase family. In terms of assembly, homooctamer; tetramer of dimers.

It is found in the cytoplasm. The enzyme catalyses 3-amino-2-oxopropyl phosphate + 1-deoxy-D-xylulose 5-phosphate = pyridoxine 5'-phosphate + phosphate + 2 H2O + H(+). It functions in the pathway cofactor biosynthesis; pyridoxine 5'-phosphate biosynthesis; pyridoxine 5'-phosphate from D-erythrose 4-phosphate: step 5/5. Catalyzes the complicated ring closure reaction between the two acyclic compounds 1-deoxy-D-xylulose-5-phosphate (DXP) and 3-amino-2-oxopropyl phosphate (1-amino-acetone-3-phosphate or AAP) to form pyridoxine 5'-phosphate (PNP) and inorganic phosphate. This is Pyridoxine 5'-phosphate synthase from Cupriavidus metallidurans (strain ATCC 43123 / DSM 2839 / NBRC 102507 / CH34) (Ralstonia metallidurans).